The primary structure comprises 80 residues: Gamma-conotoxin PnVIIA (80 aa).

Residues 1 to 19 (MEKLTILLLVAAVLMSTQA) form the signal peptide. Residues 20–43 (QNQEQRQQAKINFLSKRKPSAERW) constitute a propeptide that is removed on maturation. 3 cysteine pairs are disulfide-bonded: Cys47–Cys61, Cys54–Cys65, and Cys60–Cys70. The residue at position 59 (Glu59) is a 4-carboxyglutamate. Residue Glu71 is modified to 4-carboxyglutamate. At Pro76 the chain carries 4-hydroxyproline. The propeptide occupies 78–80 (FGA).

As to expression, expressed by the venom duct.

It localises to the secreted. Gamma-conotoxins may act on voltage-gated non-specific cation pacemaker channels (HCN). Triggers depolarization and firing of action potential bursts in the caudodorsal neurons of lymnaea. This effect is due to activation or enhancement of a slow inward cation current that may underlie endogenous bursting activity of these neurons. This chain is Gamma-conotoxin PnVIIA, found in Conus pennaceus (Feathered cone).